The chain runs to 362 residues: Resuscitation-promoting factor RpfB (362 aa).

A signal peptide spans 1–22 (MLRGVVGAFLVSLTVAGSYAVA). A G5 domain is found at 192–272 (VTRMRIEKVT…NGVLRVGAKP (81 aa)).

It belongs to the transglycosylase family. Rpf subfamily.

In terms of biological role, factor that stimulates resuscitation of dormant cells. Has peptidoglycan (PG) hydrolytic activity. Active in the pM concentration range. Has little to no effect on actively-growing cells. PG fragments could either directly activate the resuscitation pathway of dormant bacteria or serve as a substrate for endogenous Rpf, resulting in low molecular weight products with resuscitation activity. In Mycolicibacterium smegmatis (strain ATCC 700084 / mc(2)155) (Mycobacterium smegmatis), this protein is Resuscitation-promoting factor RpfB (rpfB).